A 356-amino-acid polypeptide reads, in one-letter code: Biotin synthase (356 aa).

The Radical SAM core domain occupies 54 to 278 (GEVQLCTLLS…VAVARITMPL (225 aa)). [4Fe-4S] cluster-binding residues include C69, C73, and C76. 4 residues coordinate [2Fe-2S] cluster: C113, C144, C204, and R282.

It belongs to the radical SAM superfamily. Biotin synthase family. As to quaternary structure, homodimer. The cofactor is [4Fe-4S] cluster. [2Fe-2S] cluster serves as cofactor.

The catalysed reaction is (4R,5S)-dethiobiotin + (sulfur carrier)-SH + 2 reduced [2Fe-2S]-[ferredoxin] + 2 S-adenosyl-L-methionine = (sulfur carrier)-H + biotin + 2 5'-deoxyadenosine + 2 L-methionine + 2 oxidized [2Fe-2S]-[ferredoxin]. The protein operates within cofactor biosynthesis; biotin biosynthesis; biotin from 7,8-diaminononanoate: step 2/2. Functionally, catalyzes the conversion of dethiobiotin (DTB) to biotin by the insertion of a sulfur atom into dethiobiotin via a radical-based mechanism. The polypeptide is Biotin synthase (Novosphingobium aromaticivorans (strain ATCC 700278 / DSM 12444 / CCUG 56034 / CIP 105152 / NBRC 16084 / F199)).